The chain runs to 282 residues: MIPWNAYVRLLRLNKPIGILLLWYPTAWALWMANQGFPSIDLLMIFLFGTVFMRSAGCVINDIADRHIDRHVARTQFRPLTSGEVSLSEAFILLFILLCASLLLLLKLPINCFYFAVISVLITFLYPFCKRFLNAPQLILGLAFSMGIPMAFIASGKNLNSDFIVLFLINFSWIIAYDTMYAMTDKADDLKIGVKSTAIYFASYDRLIIALLLIFLHSLWLVWAINKNAEWFFYLLWCTAAGILTYQLKLIYARIPKNCFKAFLVSGYYGLVMWFAVGLALI.

A run of 9 helical transmembrane segments spans residues 17–37 (IGIL…NQGF), 40–60 (IDLL…GCVI), 90–110 (AFIL…KLPI), 113–133 (FYFA…KRFL), 135–155 (APQL…FIAS), 163–183 (FIVL…MYAM), 207–227 (LIIA…AINK), 231–251 (WFFY…LKLI), and 262–282 (AFLV…LALI).

This sequence belongs to the UbiA prenyltransferase family. The cofactor is Mg(2+).

It is found in the cell inner membrane. It carries out the reaction all-trans-octaprenyl diphosphate + 4-hydroxybenzoate = 4-hydroxy-3-(all-trans-octaprenyl)benzoate + diphosphate. Its pathway is cofactor biosynthesis; ubiquinone biosynthesis. Functionally, catalyzes the prenylation of para-hydroxybenzoate (PHB) with an all-trans polyprenyl group. Mediates the second step in the final reaction sequence of ubiquinone-8 (UQ-8) biosynthesis, which is the condensation of the polyisoprenoid side chain with PHB, generating the first membrane-bound Q intermediate 3-octaprenyl-4-hydroxybenzoate. In Legionella pneumophila (strain Corby), this protein is 4-hydroxybenzoate octaprenyltransferase.